A 239-amino-acid polypeptide reads, in one-letter code: Flagellar L-ring protein (239 aa).

The signal sequence occupies residues 1–16 (MKPVILATASALLLAA). A lipid anchor (N-palmitoyl cysteine) is attached at Cys17. Cys17 carries S-diacylglycerol cysteine lipidation. A compositionally biased stretch (polar residues) spans 120 to 138 (SGSTSGSASGNLGLTGDTS). Positions 120–145 (SGSTSGSASGNLGLTGDTSTDGKGKI) are disordered.

The protein belongs to the FlgH family. The basal body constitutes a major portion of the flagellar organelle and consists of four rings (L,P,S, and M) mounted on a central rod.

It is found in the cell outer membrane. The protein localises to the bacterial flagellum basal body. In terms of biological role, assembles around the rod to form the L-ring and probably protects the motor/basal body from shearing forces during rotation. In Azorhizobium caulinodans (strain ATCC 43989 / DSM 5975 / JCM 20966 / LMG 6465 / NBRC 14845 / NCIMB 13405 / ORS 571), this protein is Flagellar L-ring protein.